The primary structure comprises 255 residues: Ribonuclease HII (255 aa).

Positions 72 to 255 constitute an RNase H type-2 domain; sequence AIICGIDEVG…KSFEPIKSLL (184 aa). A divalent metal cation-binding residues include Asp-78, Glu-79, and Asp-170.

It belongs to the RNase HII family. The cofactor is Mn(2+). Requires Mg(2+) as cofactor.

Its subcellular location is the cytoplasm. The catalysed reaction is Endonucleolytic cleavage to 5'-phosphomonoester.. Functionally, endonuclease that specifically degrades the RNA of RNA-DNA hybrids. The chain is Ribonuclease HII from Staphylococcus aureus (strain MSSA476).